Reading from the N-terminus, the 592-residue chain is MAPGHLALFSVSDKTGLVEFARNLTALGLNLVASGGTAKALRDAGLAVRDVSELTGFPEMLGGRVKTLHPAVHAGILARNIPEDNADMARLDFNLIRVVACNLYPFVKTVASPGVTVEEAVEQIDIGGVTLLRAAAKNHARVTVVCEPEDYVVVSTEMKSSEIKDTSLETRRQLALKAFTHTAQYDEAISDYFRKQYSKGISQMPLRYGMNPHQTPAQLYTLKPKLPITVLNGAPGFINLCDALNAWQLVKELKEALGIPAAASFKHVSPAGAAVGIPLSEDEAKVCMVYDLYKTLTPISAAYARARGADRMSSFGDFVALSDVCDVPTAKIISREVSDGIIAPGYEEEALKILSKKKNGNYCVLQMDQSYKPDENEVRTLFGLHLSQKRNNGVVDKSLFSNVVTKNKDLPESALRDLIVATIAVKYTQSNSVCYAKNGQVIGIGAGQQSRIHCTRLAGDKANYWWLRHHPQVLSMKFKTGVKRAEISNAIDQYVTGTIGEDEDLIKWEALFEEVPELLTEAEKKEWVEKLTEVSISSDAFFPFRDNVDRAKRSGVAYIAAPSGSAADKVVIEACDELGIILAHTNLRLFHH.

An N-acetylmethionine modification is found at methionine 1. Positions 1 to 146 (MAPGHLALFS…KNHARVTVVC (146 aa)) constitute an MGS-like domain. The segment at 1-198 (MAPGHLALFS…ISDYFRKQYS (198 aa)) is IMP cyclohydrolase. Residues 12 to 14 (SDK), 34 to 37 (SGGT), 64 to 67 (RVKT), 101 to 102 (CN), and 125 to 126 (DI) each bind IMP. Lysine 137 (proton donor/acceptor; for FAICAR cyclization activity) is an active-site residue. N6-acetyllysine is present on lysine 199. Residues 199–592 (KGISQMPLRY…AHTNLRLFHH (394 aa)) are AICAR formyltransferase. 5-amino-1-(5-phospho-beta-D-ribosyl)imidazole-4-carboxamide contacts are provided by residues 207 to 208 (RY), histidine 267, glycine 316, aspartate 339, asparagine 431, and arginine 451. Histidine 267 serves as the catalytic Proton acceptor; for AICAR formyltransferase activity. Isoleucine 452 is a binding site for (6R)-10-formyltetrahydrofolate. Position 541 (phenylalanine 541) interacts with 5-amino-1-(5-phospho-beta-D-ribosyl)imidazole-4-carboxamide. (6R)-10-formyltetrahydrofolate-binding positions include aspartate 546 and 565–566 (SA). Arginine 588 contacts 5-amino-1-(5-phospho-beta-D-ribosyl)imidazole-4-carboxamide.

The protein belongs to the PurH family. In terms of assembly, homodimer. Associates with internalized INSR complexes on Golgi/endosomal membranes. Interacts with INSR; ATIC together with PRKAA2/AMPK2 and HACD3/PTPLAD1 is proposed to be part of a signaling network regulating INSR autophosphorylation and endocytosis.

The protein localises to the cytoplasm. The protein resides in the cytosol. It catalyses the reaction (6R)-10-formyltetrahydrofolate + 5-amino-1-(5-phospho-beta-D-ribosyl)imidazole-4-carboxamide = 5-formamido-1-(5-phospho-D-ribosyl)imidazole-4-carboxamide + (6S)-5,6,7,8-tetrahydrofolate. It carries out the reaction 10-formyldihydrofolate + 5-amino-1-(5-phospho-beta-D-ribosyl)imidazole-4-carboxamide = 5-formamido-1-(5-phospho-D-ribosyl)imidazole-4-carboxamide + 7,8-dihydrofolate. The catalysed reaction is IMP + H2O = 5-formamido-1-(5-phospho-D-ribosyl)imidazole-4-carboxamide. It functions in the pathway purine metabolism; IMP biosynthesis via de novo pathway; 5-formamido-1-(5-phospho-D-ribosyl)imidazole-4-carboxamide from 5-amino-1-(5-phospho-D-ribosyl)imidazole-4-carboxamide (10-formyl THF route): step 1/1. The protein operates within purine metabolism; IMP biosynthesis via de novo pathway; IMP from 5-formamido-1-(5-phospho-D-ribosyl)imidazole-4-carboxamide: step 1/1. AMP and XMP inhibit AICAR formyltransferase activity. In terms of biological role, bifunctional enzyme that catalyzes the last two steps of purine biosynthesis. Acts as a transformylase that incorporates a formyl group to the AMP analog AICAR (5-amino-1-(5-phospho-beta-D-ribosyl)imidazole-4-carboxamide) to produce the intermediate formyl-AICAR (FAICAR). Can use both 10-formyldihydrofolate and 10-formyltetrahydrofolate as the formyl donor in this reaction. Also catalyzes the cyclization of FAICAR to inosine monophosphate (IMP). Promotes insulin receptor/INSR autophosphorylation and is involved in INSR internalization. The sequence is that of Bifunctional purine biosynthesis protein ATIC (ATIC) from Pongo abelii (Sumatran orangutan).